Here is a 172-residue protein sequence, read N- to C-terminus: Large ribosomal subunit protein uL10 (172 aa).

The protein belongs to the universal ribosomal protein uL10 family. Part of the ribosomal stalk of the 50S ribosomal subunit. The N-terminus interacts with L11 and the large rRNA to form the base of the stalk. The C-terminus forms an elongated spine to which L12 dimers bind in a sequential fashion forming a multimeric L10(L12)X complex.

Its function is as follows. Forms part of the ribosomal stalk, playing a central role in the interaction of the ribosome with GTP-bound translation factors. The chain is Large ribosomal subunit protein uL10 from Chlorobium chlorochromatii (strain CaD3).